An 886-amino-acid polypeptide reads, in one-letter code: Peptidyl-lysine N-acetyltransferase Pat (886 aa).

In terms of domain architecture, ATP-grasp spans 487 to 523; that stretch reads QPILHAYGLHTLPTWIASDSAEAVHIAEQIGYPVALK. 513–524 contributes to the ATP binding site; the sequence is AEQIGYPVALKL. Positions 726-881 constitute an N-acetyltransferase domain; it reads CLFRPILPED…GIVGLTLNLA (156 aa).

In the N-terminal section; belongs to the acetate CoA ligase alpha subunit family. This sequence in the central section; belongs to the acetate CoA ligase beta subunit family. As to quaternary structure, monomer in the absence of acetyl-CoA. Oligomerizes to a tetrameric form in the presence of acetyl-CoA.

The catalysed reaction is L-lysyl-[protein] + acetyl-CoA = N(6)-acetyl-L-lysyl-[protein] + CoA + H(+). Exhibits positive cooperativity. It may be the result of acetyl-CoA binding to two distinct sites, or the result of subunit interactions. In terms of biological role, acetylates and inactivates the acetyl-CoA synthase (Acs). Can also acetylate other central metabolic enzymes in response to environmental changes. This Salmonella typhimurium (strain LT2 / SGSC1412 / ATCC 700720) protein is Peptidyl-lysine N-acetyltransferase Pat (pat).